A 99-amino-acid chain; its full sequence is Large ribosomal subunit protein bL28 (99 aa).

This sequence belongs to the bacterial ribosomal protein bL28 family.

In Brucella anthropi (strain ATCC 49188 / DSM 6882 / CCUG 24695 / JCM 21032 / LMG 3331 / NBRC 15819 / NCTC 12168 / Alc 37) (Ochrobactrum anthropi), this protein is Large ribosomal subunit protein bL28.